The sequence spans 181 residues: Adenylate kinase (181 aa).

10–15 (GAGKGT) serves as a coordination point for ATP. The tract at residues 30 to 59 (STGDLFRANISQGTELGKQAQEYMDAGKLV) is NMP. AMP contacts are provided by residues Thr31, Arg36, 57–59 (KLV), 85–88 (GFPR), and Gln92. Residues 126 to 132 (SRGRNDD) form an LID region. An ATP-binding site is contributed by Arg127. The AMP site is built by Arg129 and Arg140. ATP is bound at residue Gly166.

It belongs to the adenylate kinase family. Monomer.

The protein localises to the cytoplasm. The enzyme catalyses AMP + ATP = 2 ADP. Its pathway is purine metabolism; AMP biosynthesis via salvage pathway; AMP from ADP: step 1/1. Functionally, catalyzes the reversible transfer of the terminal phosphate group between ATP and AMP. Plays an important role in cellular energy homeostasis and in adenine nucleotide metabolism. The protein is Adenylate kinase of Corynebacterium urealyticum (strain ATCC 43042 / DSM 7109).